The sequence spans 891 residues: UPF0182 protein Glov_0814 (891 aa).

Transmembrane regions (helical) follow at residues 6 to 26, 51 to 71, 102 to 122, 164 to 184, 202 to 222, 244 to 264, and 266 to 286; these read LTPILFALFIIVPALTYLLAY, GIGVLFGGLLFAFLVPNLLYA, IGVLIAAGIALFVGQFGALQW, FMLLATLLVTLLVYYIRGGIA, ILLALFSCVIAAGFYLEGFGL, TLTTLAFITPVAGLLLAFGLW, and GTWRLVLLPPIVVVAAYMIGM.

It belongs to the UPF0182 family.

The protein resides in the cell membrane. The chain is UPF0182 protein Glov_0814 from Trichlorobacter lovleyi (strain ATCC BAA-1151 / DSM 17278 / SZ) (Geobacter lovleyi).